The primary structure comprises 427 residues: Galactose-3-O-sulfotransferase 3 (427 aa).

Topologically, residues methionine 1 to isoleucine 19 are cytoplasmic. Residues leucine 20–serine 40 form a helical; Signal-anchor for type II membrane protein membrane-spanning segment. At tryptophan 41–histidine 427 the chain is on the lumenal side. N-linked (GlcNAc...) asparagine glycans are attached at residues asparagine 90, asparagine 109, asparagine 176, and asparagine 301. Positions methionine 404–histidine 427 are disordered.

The protein belongs to the galactose-3-O-sulfotransferase family. Requires Mg(2+) as cofactor.

The protein resides in the golgi apparatus. It is found in the golgi stack membrane. It participates in protein modification; carbohydrate sulfation. Its function is as follows. Transfers a sulfate to position 3 of non-reducing beta-galactosyl residues in N-glycans and core2-branched O-glycans. Has high activity towards Gal-beta-1,4-GlcNAc, Gal-beta-1,4(Fuc-alpha-1,3)GlcNAc and lower activity towards Gal-beta-1,3(Fuc-alpha-1,4)GlcNAc. This Bos taurus (Bovine) protein is Galactose-3-O-sulfotransferase 3 (GAL3ST3).